The sequence spans 146 residues: uncharacterized protein (146 aa).

The next 2 membrane-spanning stretches (helical) occupy residues 89–111 and 121–143; these read AIEMVGKVLILVPLLASLVLLLY and IGCGFCLGTVILAGIVLVGYSVV.

The protein resides in the cell membrane. This is an uncharacterized protein from Archaeoglobus fulgidus (strain ATCC 49558 / DSM 4304 / JCM 9628 / NBRC 100126 / VC-16).